We begin with the raw amino-acid sequence, 303 residues long: tRNA pseudouridine synthase B (303 aa).

The active-site Nucleophile is the D47.

The protein belongs to the pseudouridine synthase TruB family. Type 1 subfamily.

It catalyses the reaction uridine(55) in tRNA = pseudouridine(55) in tRNA. Functionally, responsible for synthesis of pseudouridine from uracil-55 in the psi GC loop of transfer RNAs. The protein is tRNA pseudouridine synthase B of Ruegeria pomeroyi (strain ATCC 700808 / DSM 15171 / DSS-3) (Silicibacter pomeroyi).